Consider the following 290-residue polypeptide: 6-carboxyhexanoate--CoA ligase (290 aa).

The protein belongs to the BioW family. As to quaternary structure, homodimer. Mg(2+) serves as cofactor.

The enzyme catalyses heptanedioate + ATP + CoA = 6-carboxyhexanoyl-CoA + AMP + diphosphate. It participates in metabolic intermediate metabolism; pimeloyl-CoA biosynthesis; pimeloyl-CoA from pimelate: step 1/1. Functionally, catalyzes the transformation of pimelate into pimeloyl-CoA with concomitant hydrolysis of ATP to AMP. In Bacillus amyloliquefaciens (Bacillus velezensis), this protein is 6-carboxyhexanoate--CoA ligase.